Reading from the N-terminus, the 92-residue chain is Signal recognition particle 19 kDa protein (92 aa).

Belongs to the SRP19 family. As to quaternary structure, part of the signal recognition particle protein translocation system, which is composed of SRP and FtsY. Archaeal SRP consists of a 7S RNA molecule of 300 nucleotides and two protein subunits: SRP54 and SRP19.

The protein resides in the cytoplasm. Its function is as follows. Involved in targeting and insertion of nascent membrane proteins into the cytoplasmic membrane. Binds directly to 7S RNA and mediates binding of the 54 kDa subunit of the SRP. The chain is Signal recognition particle 19 kDa protein from Halorubrum lacusprofundi (strain ATCC 49239 / DSM 5036 / JCM 8891 / ACAM 34).